Here is a 201-residue protein sequence, read N- to C-terminus: Recombination protein RecR (201 aa).

The C4-type zinc-finger motif lies at 60–75 (CATCGNFDTVQPCAVC). The Toprim domain occupies 83–178 (GIICVVEDVP…DVTRLAHGVP (96 aa)).

This sequence belongs to the RecR family.

Its function is as follows. May play a role in DNA repair. It seems to be involved in an RecBC-independent recombinational process of DNA repair. It may act with RecF and RecO. The chain is Recombination protein RecR from Hyphomonas neptunium (strain ATCC 15444).